The sequence spans 165 residues: Nucleotide-binding protein Syncc9605_0652 (165 aa).

This sequence belongs to the YajQ family.

Functionally, nucleotide-binding protein. The sequence is that of Nucleotide-binding protein Syncc9605_0652 from Synechococcus sp. (strain CC9605).